The primary structure comprises 671 residues: Probable potassium transport system protein Kup (671 aa).

The interval 1-43 (MSQIPSPNDPASTGAAPSSAAVPAGPSATPAPSPTAGFSLPGH) is disordered. Residues 10 to 37 (PASTGAAPSSAAVPAGPSATPAPSPTAG) show a composition bias toward low complexity. A run of 12 helical transmembrane segments spans residues 52 to 72 (LAAL…TSPL), 92 to 112 (VLGV…FKYM), 147 to 167 (LMLG…TPAI), 181 to 201 (PAME…LFLF), 209 to 229 (VGAV…VLGV), 255 to 275 (GWHG…GEAL), 291 to 311 (WLGL…ALLL), 323 to 343 (LLAP…AAIV), 381 to 401 (IYLP…VLGF), 407 to 427 (LASA…LLFH), 441 to 461 (AWPL…ANVV), and 465 to 485 (DGGW…STWK).

It belongs to the HAK/KUP transporter (TC 2.A.72) family.

The protein localises to the cell inner membrane. The catalysed reaction is K(+)(in) + H(+)(in) = K(+)(out) + H(+)(out). In terms of biological role, transport of potassium into the cell. Likely operates as a K(+):H(+) symporter. This Anaeromyxobacter dehalogenans (strain 2CP-1 / ATCC BAA-258) protein is Probable potassium transport system protein Kup.